The following is a 164-amino-acid chain: Phosphopantetheine adenylyltransferase (164 aa).

Ser9 contributes to the substrate binding site. Residues 9 to 10 (SF) and His17 each bind ATP. Substrate is bound by residues Lys41, Leu74, and Arg88. ATP contacts are provided by residues 89–91 (GIR), Glu99, and 124–130 (YAEVSST).

This sequence belongs to the bacterial CoaD family. In terms of assembly, homohexamer. The cofactor is Mg(2+).

The protein resides in the cytoplasm. The enzyme catalyses (R)-4'-phosphopantetheine + ATP + H(+) = 3'-dephospho-CoA + diphosphate. The protein operates within cofactor biosynthesis; coenzyme A biosynthesis; CoA from (R)-pantothenate: step 4/5. In terms of biological role, reversibly transfers an adenylyl group from ATP to 4'-phosphopantetheine, yielding dephospho-CoA (dPCoA) and pyrophosphate. This is Phosphopantetheine adenylyltransferase from Chromobacterium violaceum (strain ATCC 12472 / DSM 30191 / JCM 1249 / CCUG 213 / NBRC 12614 / NCIMB 9131 / NCTC 9757 / MK).